The primary structure comprises 100 residues: MSDTETKPSSDGGEKKDGEYIKLKVIGQDNSEIHFKVKMTTHLKKLKESYSQRQGVPVNSLRFLFEGQRITDNLTPKELGMEDEDVIEVYQEQTGGCRND.

Residues 19–96 (EYIKLKVIGQ…IEVYQEQTGG (78 aa)) form the Ubiquitin-like domain. A Glycyl lysine isopeptide (Gly-Lys) (interchain with K-? in acceptor proteins) cross-link involves residue Gly96. Positions 97–100 (CRND) are excised as a propeptide.

The protein belongs to the ubiquitin family. SUMO subfamily. In terms of assembly, interacts with sae2, ube2i, ranbp2, pias1 and pias2. Covalently attached to a number of proteins. Post-translationally, cleavage of precursor form by a sentrin-specific protease is necessary for function.

It is found in the nucleus membrane. The protein resides in the nucleus speckle. Its subcellular location is the cytoplasm. It localises to the nucleus. The protein localises to the PML body. It is found in the cell membrane. In terms of biological role, ubiquitin-like protein that can be covalently attached to proteins as a monomer or a lysine-linked polymer. Covalent attachment via an isopeptide bond to its substrates requires prior activation by the E1 complex sae1-sae2 and linkage to the E2 enzyme ube2i. This post-translational modification on lysine residues of proteins plays a crucial role in a number of cellular processes such as nuclear transport, DNA replication and repair, mitosis and signal transduction. Polymeric sumo1 chains are also susceptible to polyubiquitination which functions as a signal for proteasomal degradation of modified proteins. This chain is Small ubiquitin-related modifier 1 (sumo1), found in Danio rerio (Zebrafish).